Consider the following 345-residue polypeptide: Phosphoribosylformylglycinamidine cyclo-ligase (345 aa).

The protein belongs to the AIR synthase family.

The protein localises to the cytoplasm. The enzyme catalyses 2-formamido-N(1)-(5-O-phospho-beta-D-ribosyl)acetamidine + ATP = 5-amino-1-(5-phospho-beta-D-ribosyl)imidazole + ADP + phosphate + H(+). Its pathway is purine metabolism; IMP biosynthesis via de novo pathway; 5-amino-1-(5-phospho-D-ribosyl)imidazole from N(2)-formyl-N(1)-(5-phospho-D-ribosyl)glycinamide: step 2/2. The polypeptide is Phosphoribosylformylglycinamidine cyclo-ligase (Shewanella frigidimarina (strain NCIMB 400)).